Here is a 458-residue protein sequence, read N- to C-terminus: A-type ATP synthase subunit B (458 aa).

This sequence belongs to the ATPase alpha/beta chains family. In terms of assembly, has multiple subunits with at least A(3), B(3), C, D, E, F, H, I and proteolipid K(x).

It is found in the cell membrane. Functionally, component of the A-type ATP synthase that produces ATP from ADP in the presence of a proton gradient across the membrane. The B chain is a regulatory subunit. This chain is A-type ATP synthase subunit B, found in Methanocella arvoryzae (strain DSM 22066 / NBRC 105507 / MRE50).